Consider the following 306-residue polypeptide: Polyadenylate-binding protein 2 (306 aa).

Over residues 1–12 (MAAAAAAAAAAG) the composition is skewed to low complexity. Positions 1 to 115 (MAAAAAAAAA…EGDPGDGAIE (115 aa)) are disordered. At A2 the chain carries N-acetylalanine. Residues 2-145 (AAAAAAAAAA…LKELQNEVEK (144 aa)) are interaction with SKIP. An Omega-N-methylarginine modification is found at R17. A Phosphoserine modification is found at S19. Over residues 30–47 (GAGGEAGEGAPGGAGDYG) the composition is skewed to gly residues. The span at 51 to 72 (ESEELEPEELLLEPEPEPEPEE) shows a compositional bias: acidic residues. S52 bears the Phosphoserine mark. Over residues 77 to 87 (PRAPPGAPGPG) the composition is skewed to pro residues. The stretch at 115-151 (EDPELEAIKARVREMEEEAEKLKELQNEVEKQMNMSP) forms a coiled coil. A stimulates PAPOLA region spans residues 119–147 (LEAIKARVREMEEEAEKLKELQNEVEKQM). 2 positions are modified to phosphoserine: S150 and S235. Residues 155–306 (NAGPVIMSIE…ARATSWYSPY (152 aa)) are necessary for homooligomerization. One can recognise an RRM domain in the interval 172–249 (RSIYVGNVDY…RQIKVIPKRT (78 aa)). Asymmetric dimethylarginine; alternate occurs at positions 238, 259, and 263. Residues R238, R259, and R263 each carry the omega-N-methylarginine; alternate modification. Asymmetric dimethylarginine is present on residues R265, R267, R269, R277, R279, R287, R289, R291, R294, R296, and R298. The tract at residues 286-306 (SRPRGRVYRGRARATSWYSPY) is interaction with PAPOLA.

Monomer and homooligomer. Binds RNA as a monomer and oligomerizes when bound to poly(A). Associates in a ternary complex with CPSF4 and NS/NS1 and interaction with NS/NS1, blocks nuclear export of host cell mRNAs. Associates in a single complex with SKIP and MYOD1 and interacts with SKIP in differentiated myocytes. Interacts with NUDT21/CPSF5. Identified in a IGF2BP1-dependent mRNP granule complex containing untranslated mRNAs. Interacts with PAPOLA, but only in presence of oligo(A) RNA. Interacts with transportin. May interact with SETX. Interacts (via RRM domain and C-terminal arginine-rich region) with ZFP36 (via hypophosphorylated form); this interaction occurs in the nucleus in a RNA-independent manner, decreases in presence of single-stranded poly(A) RNA-oligomer and in a p38-dependent-manner and may down-regulated RNA poly(A) polymerase activity. Component of the poly(A) tail exosome targeting (PAXT) complex composed of PABPN1, ZFC3H1 and MTREX. Interacts with ZFC3H1 in a RNase-insensitive manner. Interacts with FRG1. Interacts with ZC3H11A. In terms of processing, arginine dimethylation is asymmetric and involves PRMT1 and PRMT3. It does not influence the RNA binding properties. Ubiquitous.

The protein localises to the nucleus. Its subcellular location is the cytoplasm. The protein resides in the nucleus speckle. Functionally, involved in the 3'-end formation of mRNA precursors (pre-mRNA) by the addition of a poly(A) tail of 200-250 nt to the upstream cleavage product. Stimulates poly(A) polymerase (PAPOLA) conferring processivity on the poly(A) tail elongation reaction and also controls the poly(A) tail length. Increases the affinity of poly(A) polymerase for RNA. Is also present at various stages of mRNA metabolism including nucleocytoplasmic trafficking and nonsense-mediated decay (NMD) of mRNA. Cooperates with SKIP to synergistically activate E-box-mediated transcription through MYOD1 and may regulate the expression of muscle-specific genes. Binds to poly(A) and to poly(G) with high affinity. May protect the poly(A) tail from degradation. Subunit of the trimeric poly(A) tail exosome targeting (PAXT) complex, a complex that directs a subset of long and polyadenylated poly(A) RNAs for exosomal degradation. The RNA exosome is fundamental for the degradation of RNA in eukaryotic nuclei. Substrate targeting is facilitated by its cofactor MTREX, which links to RNA-binding protein adapters. The polypeptide is Polyadenylate-binding protein 2 (PABPN1) (Bos taurus (Bovine)).